We begin with the raw amino-acid sequence, 478 residues long: Putative sulfate transporter YbaR (478 aa).

A run of 12 helical transmembrane segments spans residues Ile-19–Ile-39, Val-42–Gly-62, Pro-65–Asp-85, Gly-87–Ile-107, Val-121–Phe-141, Gly-143–Pro-163, Ala-168–Val-188, Ile-220–Ala-240, Gly-259–Ile-279, Ser-295–Val-315, Ala-345–Asp-365, and Leu-366–Ser-386. In terms of domain architecture, STAS spans Lys-389–Ala-478.

It belongs to the SLC26A/SulP transporter (TC 2.A.53) family.

Its subcellular location is the cell membrane. The chain is Putative sulfate transporter YbaR (ybaR) from Bacillus subtilis (strain 168).